An 83-amino-acid chain; its full sequence is Toxin AahP985 (83 aa).

Positions 1 to 18 (MNYLVMISLALLIAGVDS) are cleaved as a signal peptide. The LCN-type CS-alpha/beta domain occupies 20 to 82 (RDAYIAKNDN…VPIKLSGECH (63 aa)). 4 cysteine pairs are disulfide-bonded: cysteine 30–cysteine 81, cysteine 34–cysteine 54, cysteine 40–cysteine 64, and cysteine 44–cysteine 66.

This sequence belongs to the long (4 C-C) scorpion toxin superfamily. Sodium channel inhibitor family. Alpha subfamily. In terms of tissue distribution, expressed by the venom gland.

The protein localises to the secreted. Binds voltage-independently at site-3 of sodium channels (Nav) and inhibits the inactivation of the activated channels, thereby blocking neuronal transmission. The protein is Toxin AahP985 of Androctonus australis (Sahara scorpion).